The following is a 286-amino-acid chain: NH(3)-dependent NAD(+) synthetase (286 aa).

51-58 lines the ATP pocket; it reads GISGGVDS. Mg(2+) is bound at residue aspartate 57. Arginine 148 contacts deamido-NAD(+). Threonine 168 contacts ATP. Glutamate 173 is a Mg(2+) binding site. The deamido-NAD(+) site is built by lysine 181 and aspartate 188. Residues lysine 197 and threonine 219 each contribute to the ATP site. 268-269 contributes to the deamido-NAD(+) binding site; it reads HK.

The protein belongs to the NAD synthetase family. In terms of assembly, homodimer.

It carries out the reaction deamido-NAD(+) + NH4(+) + ATP = AMP + diphosphate + NAD(+) + H(+). It participates in cofactor biosynthesis; NAD(+) biosynthesis; NAD(+) from deamido-NAD(+) (ammonia route): step 1/1. Its function is as follows. Catalyzes the ATP-dependent amidation of deamido-NAD to form NAD. Uses ammonia as a nitrogen source. The polypeptide is NH(3)-dependent NAD(+) synthetase (Paraburkholderia phytofirmans (strain DSM 17436 / LMG 22146 / PsJN) (Burkholderia phytofirmans)).